A 265-amino-acid chain; its full sequence is Tryptophan 2,3-dioxygenase (265 aa).

Substrate contacts are provided by residues 38 to 42 and Arg104; that span reads FIVVH. His223 contacts heme. A substrate-binding site is contributed by Thr237.

Belongs to the tryptophan 2,3-dioxygenase family. As to quaternary structure, homotetramer. It depends on heme as a cofactor.

It carries out the reaction L-tryptophan + O2 = N-formyl-L-kynurenine. The protein operates within amino-acid degradation; L-tryptophan degradation via kynurenine pathway; L-kynurenine from L-tryptophan: step 1/2. Its function is as follows. Heme-dependent dioxygenase that catalyzes the oxidative cleavage of the L-tryptophan (L-Trp) pyrrole ring and converts L-tryptophan to N-formyl-L-kynurenine. Catalyzes the oxidative cleavage of the indole moiety. The sequence is that of Tryptophan 2,3-dioxygenase from Anaeromyxobacter sp. (strain K).